Reading from the N-terminus, the 399-residue chain is Probable peptidoglycan glycosyltransferase FtsW (399 aa).

Topologically, residues 1–32 (MMAGFAQTTITKINQFYERWMPRLPAEMTARN) are cytoplasmic. A helical transmembrane segment spans residues 33–53 (VLVFCVVCLLCIGSVMVASAS). Topologically, residues 54-72 (MPYAEYMHENPFHYVVRHA) are periplasmic. The chain crosses the membrane as a helical span at residues 73–93 (ISIATAAIVAYLVYKVPLNVW). The Cytoplasmic portion of the chain corresponds to 94–97 (FKNT). A helical transmembrane segment spans residues 98 to 118 (FSFWLITILLLLAVLVIGTEV). Residues 119–126 (NGSRRWIR) are Periplasmic-facing. Residues 127 to 147 (LAGFTLQPTEVAKVMMAIFTA) traverse the membrane as a helical segment. At 148–159 (DYVVRRAKEVRT) the chain is on the cytoplasmic side. Residues 160-180 (HWKGLVRLSGVMAITVGLIIA) traverse the membrane as a helical segment. At 181–183 (EPD) the chain is on the periplasmic side. A helical membrane pass occupies residues 184-204 (LGATVVIVLMMVGIFFLAGAP). At 205–207 (PTQ) the chain is on the cytoplasmic side. A helical membrane pass occupies residues 208–228 (FAIMLGAVVMGIGFLILFEPY). The Periplasmic segment spans residues 229 to 292 (RLARAMSFTN…DFMLAVLGEE (64 aa)). The helical transmembrane segment at 293–313 (FGFVGISIVIGLSFIMLACCI) threads the bilayer. The Cytoplasmic portion of the chain corresponds to 314–327 (KIGHRALKHNFLRA). Residues 328–348 (GYLAYGISIIFLLQIIVNAGM) form a helical membrane-spanning segment. At 349 to 359 (NMGLMPTKGLT) the chain is on the periplasmic side. Residues 360–380 (LPFISYGGTSLMMCAAMISLI) traverse the membrane as a helical segment. Residues 381 to 399 (LRIDASTQEINPDREESNF) are Cytoplasmic-facing.

This sequence belongs to the SEDS family. FtsW subfamily.

The protein resides in the cell inner membrane. It carries out the reaction [GlcNAc-(1-&gt;4)-Mur2Ac(oyl-L-Ala-gamma-D-Glu-L-Lys-D-Ala-D-Ala)](n)-di-trans,octa-cis-undecaprenyl diphosphate + beta-D-GlcNAc-(1-&gt;4)-Mur2Ac(oyl-L-Ala-gamma-D-Glu-L-Lys-D-Ala-D-Ala)-di-trans,octa-cis-undecaprenyl diphosphate = [GlcNAc-(1-&gt;4)-Mur2Ac(oyl-L-Ala-gamma-D-Glu-L-Lys-D-Ala-D-Ala)](n+1)-di-trans,octa-cis-undecaprenyl diphosphate + di-trans,octa-cis-undecaprenyl diphosphate + H(+). Its pathway is cell wall biogenesis; peptidoglycan biosynthesis. Its function is as follows. Peptidoglycan polymerase that is essential for cell division. This chain is Probable peptidoglycan glycosyltransferase FtsW, found in Acinetobacter baylyi (strain ATCC 33305 / BD413 / ADP1).